Here is a 450-residue protein sequence, read N- to C-terminus: Putative receptor-like protein kinase At1g72540 (450 aa).

T73 bears the Phosphothreonine mark. In terms of domain architecture, Protein kinase spans 84 to 365; the sequence is FSKYNFLGEG…TVVKTLEPIL (282 aa). Residues 90 to 98 and K119 each bind ATP; that span reads LGEGGFGEV. Position 164 is a phosphotyrosine (Y164). D214 functions as the Proton acceptor in the catalytic mechanism. Position 218 is a phosphoserine (S218). Residue T254 is modified to Phosphothreonine. At Y262 the chain carries Phosphotyrosine.

This sequence belongs to the protein kinase superfamily. Ser/Thr protein kinase family.

The enzyme catalyses L-seryl-[protein] + ATP = O-phospho-L-seryl-[protein] + ADP + H(+). It catalyses the reaction L-threonyl-[protein] + ATP = O-phospho-L-threonyl-[protein] + ADP + H(+). The protein is Putative receptor-like protein kinase At1g72540 of Arabidopsis thaliana (Mouse-ear cress).